We begin with the raw amino-acid sequence, 87 residues long: Cell division topological specificity factor (87 aa).

The protein belongs to the MinE family.

Prevents the cell division inhibition by proteins MinC and MinD at internal division sites while permitting inhibition at polar sites. This ensures cell division at the proper site by restricting the formation of a division septum at the midpoint of the long axis of the cell. The protein is Cell division topological specificity factor of Acidiphilium cryptum (strain JF-5).